The primary structure comprises 206 residues: Small ribosomal subunit protein uS4 (206 aa).

The S4 RNA-binding domain maps to 96–156 (GRLDNVVYRM…EKSKKQARIK (61 aa)).

This sequence belongs to the universal ribosomal protein uS4 family. As to quaternary structure, part of the 30S ribosomal subunit. Contacts protein S5. The interaction surface between S4 and S5 is involved in control of translational fidelity.

Functionally, one of the primary rRNA binding proteins, it binds directly to 16S rRNA where it nucleates assembly of the body of the 30S subunit. In terms of biological role, with S5 and S12 plays an important role in translational accuracy. The sequence is that of Small ribosomal subunit protein uS4 from Mannheimia succiniciproducens (strain KCTC 0769BP / MBEL55E).